The following is a 240-amino-acid chain: UDP-2,3-diacylglucosamine hydrolase (240 aa).

D8, H10, D41, N79, and H114 together coordinate Mn(2+). Residue 79 to 80 (NR) participates in substrate binding. Positions 122, 160, 164, 167, and 195 each coordinate substrate. Positions 195 and 197 each coordinate Mn(2+).

It belongs to the LpxH family. Mn(2+) serves as cofactor.

The protein localises to the cell inner membrane. It carries out the reaction UDP-2-N,3-O-bis[(3R)-3-hydroxytetradecanoyl]-alpha-D-glucosamine + H2O = 2-N,3-O-bis[(3R)-3-hydroxytetradecanoyl]-alpha-D-glucosaminyl 1-phosphate + UMP + 2 H(+). Its pathway is glycolipid biosynthesis; lipid IV(A) biosynthesis; lipid IV(A) from (3R)-3-hydroxytetradecanoyl-[acyl-carrier-protein] and UDP-N-acetyl-alpha-D-glucosamine: step 4/6. Its function is as follows. Hydrolyzes the pyrophosphate bond of UDP-2,3-diacylglucosamine to yield 2,3-diacylglucosamine 1-phosphate (lipid X) and UMP by catalyzing the attack of water at the alpha-P atom. Involved in the biosynthesis of lipid A, a phosphorylated glycolipid that anchors the lipopolysaccharide to the outer membrane of the cell. In Escherichia coli O7:K1 (strain IAI39 / ExPEC), this protein is UDP-2,3-diacylglucosamine hydrolase.